The following is a 511-amino-acid chain: Vicilin-like seed storage protein At2g28490 (511 aa).

A signal peptide spans 1-27 (MEKNKRAIGFLLLVVLINGVMMTRSNG). The disordered stretch occupies residues 54-81 (GGGGGGAWGGEGEGGGEWGGGGEGGGGG). Cupin type-1 domains lie at 86-238 (FMMR…PELQ) and 329-480 (YNIY…ETMR). Residues Asn231, Asn369, Asn403, and Asn464 are each glycosylated (N-linked (GlcNAc...) asparagine).

It belongs to the 7S seed storage protein family.

In terms of biological role, seed storage protein. The chain is Vicilin-like seed storage protein At2g28490 from Arabidopsis thaliana (Mouse-ear cress).